Consider the following 112-residue polypeptide: Putative pterin-4-alpha-carbinolamine dehydratase (112 aa).

Belongs to the pterin-4-alpha-carbinolamine dehydratase family.

The enzyme catalyses (4aS,6R)-4a-hydroxy-L-erythro-5,6,7,8-tetrahydrobiopterin = (6R)-L-erythro-6,7-dihydrobiopterin + H2O. This is Putative pterin-4-alpha-carbinolamine dehydratase from Shewanella sp. (strain MR-4).